The following is a 678-amino-acid chain: Amino-acid acetyltransferase, mitochondrial (678 aa).

The segment at 86 to 111 is disordered; sequence LKAQHPPKAQTEPTTGHSKGTVTQSL. A compositionally biased stretch (polar residues) spans 96-111; that stretch reads TEPTTGHSKGTVTQSL. The region spanning 499–668 is the N-acetyltransferase domain; sequence NRPRLSLDDP…YEQVCRSIQP (170 aa).

Belongs to the acetyltransferase family.

Its subcellular location is the mitochondrion. It catalyses the reaction L-glutamate + acetyl-CoA = N-acetyl-L-glutamate + CoA + H(+). It functions in the pathway amino-acid biosynthesis; L-arginine biosynthesis; N(2)-acetyl-L-ornithine from L-glutamate: step 1/4. N-acetylglutamate synthase involved in arginine biosynthesis. In Aspergillus oryzae (strain ATCC 42149 / RIB 40) (Yellow koji mold), this protein is Amino-acid acetyltransferase, mitochondrial (arg2).